Reading from the N-terminus, the 423-residue chain is Methanol:N,N-dimethyl-4-nitrosoaniline oxidoreductase (423 aa).

This sequence belongs to the iron-containing alcohol dehydrogenase family. In terms of assembly, homodecamer. Mg(2+) serves as cofactor. It depends on Zn(2+) as a cofactor. The cofactor is NADPH.

It carries out the reaction methanol + A = formaldehyde + AH2. Catalyzes the oxidation of methanol to yield formaldehyde. While the in vivo electron acceptor is not known, N,N-dimethyl-4-nitrosoaniline (NDMA) can serve this function in vitro and is reduced to 4-(hydroxylamino)-N,N-dimethylaniline. It is also able to use ethanol and formaldehyde with an activity comparable to methanol, and has a weak activity with methylamine as substrate. The polypeptide is Methanol:N,N-dimethyl-4-nitrosoaniline oxidoreductase (Mycobacterium sp. (strain DSM 3803 / JC1)).